A 233-amino-acid polypeptide reads, in one-letter code: UPF0173 metal-dependent hydrolase Acid345_3437 (233 aa).

It belongs to the UPF0173 family.

This is UPF0173 metal-dependent hydrolase Acid345_3437 from Koribacter versatilis (strain Ellin345).